The following is a 1414-amino-acid chain: DNA-directed RNA polymerase subunit beta' (1414 aa).

Zn(2+)-binding residues include Cys70, Cys72, Cys85, and Cys88. Mg(2+) is bound by residues Asp460, Asp462, and Asp464. Residues Cys814, Cys888, Cys895, and Cys898 each contribute to the Zn(2+) site. The interval 1378–1414 (EREAARQLANPFEDAPVTVGGEPEAPAADTPSDDSAE) is disordered.

It belongs to the RNA polymerase beta' chain family. The RNAP catalytic core consists of 2 alpha, 1 beta, 1 beta' and 1 omega subunit. When a sigma factor is associated with the core the holoenzyme is formed, which can initiate transcription. Mg(2+) is required as a cofactor. Requires Zn(2+) as cofactor.

It catalyses the reaction RNA(n) + a ribonucleoside 5'-triphosphate = RNA(n+1) + diphosphate. Its function is as follows. DNA-dependent RNA polymerase catalyzes the transcription of DNA into RNA using the four ribonucleoside triphosphates as substrates. The chain is DNA-directed RNA polymerase subunit beta' from Bordetella bronchiseptica (strain ATCC BAA-588 / NCTC 13252 / RB50) (Alcaligenes bronchisepticus).